Reading from the N-terminus, the 205-residue chain is MSGQGTGFSLGEGVEVRPDKIRLFGKWSWVGVEVRDPSLKRYINLKPVWLPHTGGRHEKRRFGKAEVPIVERLMNKLMRPGRNGGKKHLAYNIVKTAFDIIYFETGENPIQVLVKAIENSAPREDTTKITYGGITYRVSVDVAPQRRVDQALKFIADGARQCAFNNPKPIEECLAEELILAARGDPRSYAIRQKEEIERIALSSR.

Belongs to the universal ribosomal protein uS7 family. Part of the 30S ribosomal subunit.

Its function is as follows. One of the primary rRNA binding proteins, it binds directly to 16S rRNA where it nucleates assembly of the head domain of the 30S subunit. Is located at the subunit interface close to the decoding center. In Aeropyrum pernix (strain ATCC 700893 / DSM 11879 / JCM 9820 / NBRC 100138 / K1), this protein is Small ribosomal subunit protein uS7.